Reading from the N-terminus, the 65-residue chain is Hirudin-2B (65 aa).

The interaction with thrombin active site stretch occupies residues I1–Y3. Intrachain disulfides connect C6/C14, C16/C28, and C22/C39. Positions C39–Q65 are disordered. T45 carries O-linked (GalNAc...) threonine glycosylation. An interaction with fibrinogen-binding exosite of thrombin region spans residues D55–Q65. Residues D55–Q65 are compositionally biased toward acidic residues. Y63 is modified (sulfotyrosine).

This sequence belongs to the protease inhibitor I14 (hirudin) family.

It is found in the secreted. Its function is as follows. Hirudin is a potent thrombin-specific protease inhibitor. It forms a stable non-covalent complex with alpha-thrombin, thereby abolishing its ability to cleave fibrinogen. The protein is Hirudin-2B of Hirudo medicinalis (Medicinal leech).